Here is a 239-residue protein sequence, read N- to C-terminus: Lipoprotein-releasing system ATP-binding protein LolD (239 aa).

One can recognise an ABC transporter domain in the interval 10–239 (VELSGVRKDY…ADGPHRRSGA (230 aa)). 46–53 (GPSGSGKS) serves as a coordination point for ATP.

The protein belongs to the ABC transporter superfamily. Lipoprotein translocase (TC 3.A.1.125) family. As to quaternary structure, the complex is composed of two ATP-binding proteins (LolD) and two transmembrane proteins (LolC and LolE).

The protein resides in the cell inner membrane. Functionally, part of the ABC transporter complex LolCDE involved in the translocation of mature outer membrane-directed lipoproteins, from the inner membrane to the periplasmic chaperone, LolA. Responsible for the formation of the LolA-lipoprotein complex in an ATP-dependent manner. The chain is Lipoprotein-releasing system ATP-binding protein LolD from Anaeromyxobacter dehalogenans (strain 2CP-C).